A 384-amino-acid polypeptide reads, in one-letter code: MLPVLPPALLALADGTTFLGTSIGAPGRTVGEVVFNTALTGYQEILTDPSYCRQIVTLTYPHIGNVGVNEEDVEAAKVHAAGLVIKDLPLRVSNFRAAMPLSQYLEREGTVAIAGIDTRRLTRVLRTTGAQNGCIVSFAPGTVVGEAEIAAAVAAAKAAPSMAGLDLAQVVSADAPYEWTETSWQLGRGHGTLADAEFHVVAYDFGVKRNILRLLADRGCRVTVVPARTPAAEVFKLKPDGVFLSNGPGDPEPCDYAIAAAREIIDAGVPTFGICLGHQIMALASGAKTFKMKFGHHGANHPVKDLDSGRVSITSQNHGFAVDEKTLGANLRPTHVSLFDGTLQGLARTDRPAFCFQGHPEASPGPHDIGYLFDRFVALMQERA.

The interval 1 to 195 (MLPVLPPALL…LGRGHGTLAD (195 aa)) is CPSase. Residues S50, G247, and G249 each coordinate L-glutamine. Residues 199–384 (HVVAYDFGVK…RFVALMQERA (186 aa)) enclose the Glutamine amidotransferase type-1 domain. C275 acts as the Nucleophile in catalysis. Residues L276, Q279, N317, G319, and F320 each coordinate L-glutamine. Catalysis depends on residues H359 and E361.

This sequence belongs to the CarA family. As to quaternary structure, composed of two chains; the small (or glutamine) chain promotes the hydrolysis of glutamine to ammonia, which is used by the large (or ammonia) chain to synthesize carbamoyl phosphate. Tetramer of heterodimers (alpha,beta)4.

The catalysed reaction is hydrogencarbonate + L-glutamine + 2 ATP + H2O = carbamoyl phosphate + L-glutamate + 2 ADP + phosphate + 2 H(+). The enzyme catalyses L-glutamine + H2O = L-glutamate + NH4(+). It participates in amino-acid biosynthesis; L-arginine biosynthesis; carbamoyl phosphate from bicarbonate: step 1/1. It functions in the pathway pyrimidine metabolism; UMP biosynthesis via de novo pathway; (S)-dihydroorotate from bicarbonate: step 1/3. Small subunit of the glutamine-dependent carbamoyl phosphate synthetase (CPSase). CPSase catalyzes the formation of carbamoyl phosphate from the ammonia moiety of glutamine, carbonate, and phosphate donated by ATP, constituting the first step of 2 biosynthetic pathways, one leading to arginine and/or urea and the other to pyrimidine nucleotides. The small subunit (glutamine amidotransferase) binds and cleaves glutamine to supply the large subunit with the substrate ammonia. The polypeptide is Carbamoyl phosphate synthase small chain (Rubrivivax gelatinosus (strain NBRC 100245 / IL144)).